The chain runs to 198 residues: Small ribosomal subunit protein uS4c (198 aa).

The S4 RNA-binding domain maps to 85–145 (LRLDATIFRL…PKKFTIILIC (61 aa)).

This sequence belongs to the universal ribosomal protein uS4 family. In terms of assembly, part of the 30S ribosomal subunit.

It localises to the plastid. Its subcellular location is the apicoplast. One of the primary rRNA binding proteins, it binds directly to 16S rRNA where it nucleates assembly of the body of the 30S subunit. This is Small ribosomal subunit protein uS4c (rps4) from Toxoplasma gondii.